The sequence spans 143 residues: Large ribosomal subunit protein uL13 (143 aa).

Belongs to the universal ribosomal protein uL13 family. As to quaternary structure, part of the 50S ribosomal subunit.

Its function is as follows. This protein is one of the early assembly proteins of the 50S ribosomal subunit, although it is not seen to bind rRNA by itself. It is important during the early stages of 50S assembly. This chain is Large ribosomal subunit protein uL13, found in Prochlorococcus marinus (strain MIT 9312).